We begin with the raw amino-acid sequence, 279 residues long: Protease HtpX homolog (279 aa).

Helical transmembrane passes span 4-24 (IFLFLATNIAVLVVINIVLAV) and 34-54 (GSLLAYSAVVGFTGSIISLLM). Residue His140 coordinates Zn(2+). Residue Glu141 is part of the active site. His144 is a binding site for Zn(2+). 2 helical membrane passes run 155–175 (LIQGVVNTFVVFLSRIIANLI) and 189–209 (FLVSMVFQILFGFLASLIVMW). A Zn(2+)-binding site is contributed by Glu215.

It belongs to the peptidase M48B family. Zn(2+) serves as cofactor.

It localises to the cell inner membrane. This chain is Protease HtpX homolog, found in Neisseria meningitidis serogroup B (strain ATCC BAA-335 / MC58).